We begin with the raw amino-acid sequence, 326 residues long: MIDFASFYQVIAKSRLSHWLHTLPAQLNAWENSERHGNLPKWQRVLTKLEHYQSSHVNLSDRVEIGQPGEISAGETRKLENLLQHFHPWRKGPFYLFGIHIDTEWRSDWKWDRVLPHISPLKDRYVLDVGCGSGYHLWRMRGEGAELAVGIDPAALFLCQFTAVKQLGGNDPQVHFLPLGIQELPPLRAFDTVFSMGVLYHRRSPIDHIYQLKDQLRDGGELVLETLIVDGDENTVLVPDDRYAQMNNVWFLPSPAAMIKWLKKCGFQDVRMVDEDVTTTDEQRKTEWMQNDSLAQYLMPDDPTRTIEGYPAPKRAVFVATRGSED.

Positions 91, 105, 110, 130, 196, 200, and 315 each coordinate carboxy-S-adenosyl-L-methionine.

It belongs to the class I-like SAM-binding methyltransferase superfamily. CmoB family. Homotetramer.

It catalyses the reaction carboxy-S-adenosyl-L-methionine + 5-hydroxyuridine(34) in tRNA = 5-carboxymethoxyuridine(34) in tRNA + S-adenosyl-L-homocysteine + H(+). In terms of biological role, catalyzes carboxymethyl transfer from carboxy-S-adenosyl-L-methionine (Cx-SAM) to 5-hydroxyuridine (ho5U) to form 5-carboxymethoxyuridine (cmo5U) at position 34 in tRNAs. This chain is tRNA U34 carboxymethyltransferase, found in Tolumonas auensis (strain DSM 9187 / NBRC 110442 / TA 4).